We begin with the raw amino-acid sequence, 460 residues long: Argininosuccinate lyase (460 aa).

It belongs to the lyase 1 family. Argininosuccinate lyase subfamily.

The protein localises to the cytoplasm. It catalyses the reaction 2-(N(omega)-L-arginino)succinate = fumarate + L-arginine. The protein operates within amino-acid biosynthesis; L-arginine biosynthesis; L-arginine from L-ornithine and carbamoyl phosphate: step 3/3. The protein is Argininosuccinate lyase of Lacticaseibacillus paracasei (strain ATCC 334 / BCRC 17002 / CCUG 31169 / CIP 107868 / KCTC 3260 / NRRL B-441) (Lactobacillus paracasei).